The sequence spans 217 residues: Thiopurine S-methyltransferase (217 aa).

S-adenosyl-L-methionine contacts are provided by tryptophan 10, leucine 45, glutamate 66, and arginine 127.

This sequence belongs to the class I-like SAM-binding methyltransferase superfamily. TPMT family.

Its subcellular location is the cytoplasm. The catalysed reaction is S-adenosyl-L-methionine + a thiopurine = S-adenosyl-L-homocysteine + a thiopurine S-methylether.. This chain is Thiopurine S-methyltransferase, found in Acinetobacter baylyi (strain ATCC 33305 / BD413 / ADP1).